We begin with the raw amino-acid sequence, 77 residues long: Acyl carrier protein (77 aa).

Residues 2-77 form the Carrier domain; the sequence is ADVLERVTKI…DAVNYIKSRL (76 aa). O-(pantetheine 4'-phosphoryl)serine is present on Ser-37.

It belongs to the acyl carrier protein (ACP) family. 4'-phosphopantetheine is transferred from CoA to a specific serine of apo-ACP by AcpS. This modification is essential for activity because fatty acids are bound in thioester linkage to the sulfhydryl of the prosthetic group.

Its subcellular location is the cytoplasm. It participates in lipid metabolism; fatty acid biosynthesis. Functionally, carrier of the growing fatty acid chain in fatty acid biosynthesis. The protein is Acyl carrier protein of Geobacillus kaustophilus (strain HTA426).